Consider the following 204-residue polypeptide: MSAIKTITKASHLIDMNDIIREGHPTLRAVAQDVTFPLNEDDIILGEKMLQFLKNSQDPVTAEKMELRGGVGLAAPQLDISKRIIAVLIPNPEDKDGNPPKEAYALKEVMYNPRIIAHSVQDAALADGEGCLSVDRVVEGYVIRHSRVTIEYYDKNSDKKKLKLKGYQSIVVQHEIDHTNGIMFFDRINEKNPFEIKEGLLLIE.

Residues Cys-131 and His-174 each contribute to the Fe cation site. The active site involves Glu-175. His-178 is a Fe cation binding site.

The protein belongs to the polypeptide deformylase family. It depends on Fe(2+) as a cofactor.

It catalyses the reaction N-terminal N-formyl-L-methionyl-[peptide] + H2O = N-terminal L-methionyl-[peptide] + formate. In terms of biological role, removes the formyl group from the N-terminal Met of newly synthesized proteins. Requires at least a dipeptide for an efficient rate of reaction. N-terminal L-methionine is a prerequisite for activity but the enzyme has broad specificity at other positions. This chain is Peptide deformylase, found in Streptococcus mutans serotype c (strain ATCC 700610 / UA159).